A 335-amino-acid chain; its full sequence is Pyridoxal 5'-phosphate synthase subunit PdxS (335 aa).

Residue D30 coordinates D-ribose 5-phosphate. K87 acts as the Schiff-base intermediate with D-ribose 5-phosphate in catalysis. G159 contributes to the D-ribose 5-phosphate binding site. R171 is a D-glyceraldehyde 3-phosphate binding site. D-ribose 5-phosphate contacts are provided by residues G257 and 278 to 279 (GS).

The protein belongs to the PdxS/SNZ family. In the presence of PdxT, forms a dodecamer of heterodimers.

The enzyme catalyses aldehydo-D-ribose 5-phosphate + D-glyceraldehyde 3-phosphate + L-glutamine = pyridoxal 5'-phosphate + L-glutamate + phosphate + 3 H2O + H(+). It functions in the pathway cofactor biosynthesis; pyridoxal 5'-phosphate biosynthesis. Its function is as follows. Catalyzes the formation of pyridoxal 5'-phosphate from ribose 5-phosphate (RBP), glyceraldehyde 3-phosphate (G3P) and ammonia. The ammonia is provided by the PdxT subunit. Can also use ribulose 5-phosphate and dihydroxyacetone phosphate as substrates, resulting from enzyme-catalyzed isomerization of RBP and G3P, respectively. The chain is Pyridoxal 5'-phosphate synthase subunit PdxS from Pyrococcus furiosus (strain ATCC 43587 / DSM 3638 / JCM 8422 / Vc1).